We begin with the raw amino-acid sequence, 104 residues long: Probable guanidinium efflux system subunit GdnD (104 aa).

4 consecutive transmembrane segments (helical) span residues 3–23, 31–51, 58–78, and 84–104; these read WICL…MNQF, WIFL…LAME, AYAV…ILFY, and GKRI…KLIS.

It belongs to the drug/metabolite transporter (DMT) superfamily. Small multidrug resistance (SMR) (TC 2.A.7.1) family. YkkC/YkkD subfamily. In terms of assembly, the efflux pump is composed of GdnC and GdnD.

It is found in the cell membrane. In terms of biological role, probably involved in guanidinium transport. In Bacillus licheniformis (strain ATCC 14580 / DSM 13 / JCM 2505 / CCUG 7422 / NBRC 12200 / NCIMB 9375 / NCTC 10341 / NRRL NRS-1264 / Gibson 46), this protein is Probable guanidinium efflux system subunit GdnD.